A 282-amino-acid polypeptide reads, in one-letter code: Elongation factor Ts (282 aa).

The segment at 79-82 is involved in Mg(2+) ion dislocation from EF-Tu; the sequence is TDFV.

Belongs to the EF-Ts family.

Its subcellular location is the cytoplasm. Functionally, associates with the EF-Tu.GDP complex and induces the exchange of GDP to GTP. It remains bound to the aminoacyl-tRNA.EF-Tu.GTP complex up to the GTP hydrolysis stage on the ribosome. The polypeptide is Elongation factor Ts (Shewanella loihica (strain ATCC BAA-1088 / PV-4)).